A 1414-amino-acid chain; its full sequence is MKALLDLFKQVQQEEQFDAIKIGLASPEKIRSWSYGEVKKPETINYRTFKPERDGLFCAKIFGPIKDYECLCGKYKRLKHRGVICEKCGVEVTLAKVRRERMGHIELAAPTAHIWFLKSLPSRLGMVLDMTLRDIERVLYFEAFVVIEPGMTPLKKSQIMSEDDYLAKCDEYGEGEFVAMMGAEGIRELLRGIDIEKQIEQIRAELQATGSEAKIKKFAKRLKVLEAFQRSGIKPEWMILEVLPVLPPELRPLVPLDGGRFATSDLNDLYRRVINRNNRLKRLLELKAPEIIVRNEKRMLQEAVDSLLDNGRRGKAMTGANKRPLKSLAEMIKGKGGRFRQNLLGKRVDYSGRSVIVVGPTLKLHQCGLPKLMALELFKPFIFHKLETMGIATTIKAAKKEVESQTPVVWDILEEVIREHPVMLNRAPTLHRLGIQAFEPVLIEGKAIQLHPLVCAAFNADFDGDQMAVHVPLSLEAQMEARTLMLASNNVLFPANGDPSIVPSQDVVLGLYYTTRDKINGKGEGMTFADISEVIRAYENKEVELASRVNVRITEYELVDKDAEGDARFAPKVTLQATTVGRAILSEILPKGLPFSVLNKPLKKKEISRLINTAFRRCGLRETVIFADKLLQSGFRLATRAGISIAIDDMLVPPAKEKIIAEASAKVKEYDKQYMSGLVTDQERYNNVVDIWGAAGDQVGKAMMEQLQHEDVVDREGKTVKQESFNSIYMMADSGARGSAAQIRQLAGMRGLMAKPDGSIIETPITANFREGLNVLQYFISTHGARKGLADTALKTANSGYLTRRLVDVTQDLVVVEDDCGTSNGVAMKALVEGGEVIEALRDRILGRVTVADVVNPETQETAIEAGTLLDEDLVELIDNIGVDEVKVRTPLSCDTRYGLCAKCYGRDLGRGVLVNSGEAVGVIAAQSIGEPGTQLTMRTFHIGGAASRAAVASSVEAKATGTVRFTATMRYVTNAKGELIVISRSGEALITDDHGRERERHKIPYGATLLVQDGQAIKAGTQLATWDALTRPIVSEYSGTIKFENVEEGVTVAKQMDEVTGLSTLVVIDAKRRTAATKGIRPQVKLLDANGQEVKIPGTDHSVTIGFQVGALITVKDGQQVHVGEVLARIPTESQKTRDITGGLPRVAELFEARSPKDAAVLAEVTGTTSFGKDTKGKQRLVITDLDGNAHEFLIAKEKQVLVHDGQVVNKGEMIVEGPADPHDILRLKGIEELAHYIVDEVQDVYRLQGVKINDKHIEVIVRQMLRRVQIVDVGDTKFIPGEQVERSELLDENDRVIAEGKRPATYENLLLGITKASLSTDSFISAASFQETTRVLTEAAIMGKTDDLRGLKENVIVGRLIPAGTGLAYHRARKAREASERERAQAIAEEEQSLFIEPPVVQATTEGEGDNV.

4 residues coordinate Zn(2+): Cys-70, Cys-72, Cys-85, and Cys-88. Mg(2+) contacts are provided by Asp-461, Asp-463, and Asp-465. Residues Cys-820, Cys-894, Cys-901, and Cys-904 each contribute to the Zn(2+) site.

This sequence belongs to the RNA polymerase beta' chain family. In terms of assembly, the RNAP catalytic core consists of 2 alpha, 1 beta, 1 beta' and 1 omega subunit. When a sigma factor is associated with the core the holoenzyme is formed, which can initiate transcription. Mg(2+) serves as cofactor. Requires Zn(2+) as cofactor.

It catalyses the reaction RNA(n) + a ribonucleoside 5'-triphosphate = RNA(n+1) + diphosphate. DNA-dependent RNA polymerase catalyzes the transcription of DNA into RNA using the four ribonucleoside triphosphates as substrates. The polypeptide is DNA-directed RNA polymerase subunit beta' (Cupriavidus taiwanensis (strain DSM 17343 / BCRC 17206 / CCUG 44338 / CIP 107171 / LMG 19424 / R1) (Ralstonia taiwanensis (strain LMG 19424))).